Reading from the N-terminus, the 365-residue chain is Serpentine receptor class epsilon-21 (365 aa).

The next 7 membrane-spanning stretches (helical) occupy residues 49-69 (ILIN…VFCI), 82-102 (IIIS…FVFI), 116-136 (LLFW…HTLL), 158-178 (VWIA…YAFL), 189-209 (IFIV…IIYF), 250-270 (VVVV…PIIL), and 292-314 (PLVV…LSYY).

Belongs to the nematode receptor-like protein sre family.

The protein localises to the membrane. The sequence is that of Serpentine receptor class epsilon-21 (sre-21) from Caenorhabditis elegans.